Consider the following 235-residue polypeptide: UDP-2,3-diacylglucosamine hydrolase (235 aa).

Residues D9, H11, D42, N80, and H115 each coordinate Mn(2+). 80 to 81 (NR) contributes to the substrate binding site. 5 residues coordinate substrate: D123, S161, K165, K168, and H196. 2 residues coordinate Mn(2+): H196 and H198.

This sequence belongs to the LpxH family. Mn(2+) serves as cofactor.

The protein localises to the cell inner membrane. It carries out the reaction UDP-2-N,3-O-bis[(3R)-3-hydroxytetradecanoyl]-alpha-D-glucosamine + H2O = 2-N,3-O-bis[(3R)-3-hydroxytetradecanoyl]-alpha-D-glucosaminyl 1-phosphate + UMP + 2 H(+). The protein operates within glycolipid biosynthesis; lipid IV(A) biosynthesis; lipid IV(A) from (3R)-3-hydroxytetradecanoyl-[acyl-carrier-protein] and UDP-N-acetyl-alpha-D-glucosamine: step 4/6. Functionally, hydrolyzes the pyrophosphate bond of UDP-2,3-diacylglucosamine to yield 2,3-diacylglucosamine 1-phosphate (lipid X) and UMP by catalyzing the attack of water at the alpha-P atom. Involved in the biosynthesis of lipid A, a phosphorylated glycolipid that anchors the lipopolysaccharide to the outer membrane of the cell. The protein is UDP-2,3-diacylglucosamine hydrolase of Actinobacillus succinogenes (strain ATCC 55618 / DSM 22257 / CCUG 43843 / 130Z).